We begin with the raw amino-acid sequence, 594 residues long: Actin-histidine N-methyltransferase (594 aa).

Residues 1 to 23 are disordered; the sequence is MGKKSRVKTQKSGTGATASVSPK. Over residues 10–23 the composition is skewed to polar residues; it reads QKSGTGATASVSPK. Residues R75, 104–106, R254, 275–279, and 325–327 each bind S-adenosyl-L-methionine; these read EGF, DMCNH, and SGF. An SET domain is found at 94–314; sequence EGFEMVSFKE…AGEQIYIFYG (221 aa). The tract at residues 553–594 is disordered; sequence INGENSIPNGTRLEKEDLNQEQSKRVTEDAKEPSDSTEEVKE. Residues 564–594 are compositionally biased toward basic and acidic residues; sequence RLEKEDLNQEQSKRVTEDAKEPSDSTEEVKE.

This sequence belongs to the class V-like SAM-binding methyltransferase superfamily. SETD3 actin-histidine methyltransferase family. Interacts with MYOD1. Post-translationally, phosphorylated by GSK3B, which is required for recognition by the SCF(FBXW7) complex and subsequent degradation. In terms of processing, ubiquitinated by the SCF(FBXW7) complex following phosphorylation by GSK3B, leading to its degradation by the proteasome.

Its subcellular location is the cytoplasm. It is found in the nucleus. The catalysed reaction is L-histidyl-[protein] + S-adenosyl-L-methionine = N(tele)-methyl-L-histidyl-[protein] + S-adenosyl-L-homocysteine + H(+). Protein-histidine N-methyltransferase that specifically mediates 3-methylhistidine (tele-methylhistidine) methylation of actin at 'His-73'. Histidine methylation of actin is required for smooth muscle contraction of the laboring uterus during delivery. Does not have protein-lysine N-methyltransferase activity and probably only catalyzes histidine methylation of actin. This is Actin-histidine N-methyltransferase from Rhinolophus ferrumequinum (Greater horseshoe bat).